The primary structure comprises 83 residues: Small ribosomal subunit protein eS21 (83 aa).

Position 1 is an N-acetylmethionine (Met-1). Lys-81 is subject to N6-acetyllysine.

It belongs to the eukaryotic ribosomal protein eS21 family. In terms of assembly, component of the 40S small ribosomal subunit.

The protein resides in the cytoplasm. It localises to the cytosol. The protein localises to the rough endoplasmic reticulum. In terms of biological role, component of the small ribosomal subunit. The ribosome is a large ribonucleoprotein complex responsible for the synthesis of proteins in the cell. In Mus musculus (Mouse), this protein is Small ribosomal subunit protein eS21 (Rps21).